Here is a 256-residue protein sequence, read N- to C-terminus: Phosphonates import ATP-binding protein PhnC (256 aa).

Positions 5-253 (LRITGLVKEY…MLKTIYGGES (249 aa)) constitute an ABC transporter domain. 38–45 (GPSGTGKS) contacts ATP.

Belongs to the ABC transporter superfamily. Phosphonates importer (TC 3.A.1.9.1) family. As to quaternary structure, the complex is composed of two ATP-binding proteins (PhnC), two transmembrane proteins (PhnE) and a solute-binding protein (PhnD).

The protein localises to the cell inner membrane. It catalyses the reaction phosphonate(out) + ATP + H2O = phosphonate(in) + ADP + phosphate + H(+). Part of the ABC transporter complex PhnCDE involved in phosphonates import. Responsible for energy coupling to the transport system. This is Phosphonates import ATP-binding protein PhnC from Bordetella parapertussis (strain 12822 / ATCC BAA-587 / NCTC 13253).